The following is a 1506-amino-acid chain: Phosphatidylinositol 3-kinase C2 domain-containing subunit gamma (1506 aa).

The tract at residues 1-34 (MAYSWQTEPNRTEPQEDGSDTQQFHHTNQHLSSR) is disordered. Residues 20 to 34 (DTQQFHHTNQHLSSR) show a composition bias toward polar residues. The region spanning 285–371 (DTKFRVKISI…IQLHLQKNRD (87 aa)) is the PI3K-RBD domain. The 149-residue stretch at 541-689 (LQSHLSFTVC…SPLTLQIDFP (149 aa)) folds into the C2 PI3K-type domain. A PIK helical domain is found at 704–880 (RTDHEEPPRE…QELLAALQFC (177 aa)). The PI3K/PI4K catalytic domain maps to 949-1227 (DRDACSYFTS…KIKESLECFP (279 aa)). Residues 955–961 (YFTSNAS) form a G-loop region. The catalytic loop stretch occupies residues 1091–1099 (GVCDRHNDN). An activation loop region spans residues 1110 to 1136 (HIDFGKFLGHAQTFGGIKRDRAPFIFT). Residues 1260–1372 (LNKTRTIQRV…SFFLSEHIQP (113 aa)) enclose the PX domain. The C2 domain maps to 1381-1506 (DPGENSLDKS…KWYPLGNSII (126 aa)).

The protein belongs to the PI3/PI4-kinase family. In terms of tissue distribution, expressed predominantly in liver. Also found in kidney, lung and lymphoid tissue. Down-regulated in BeF3 cells expressing the BCR-ABL oncogene p185.

Its subcellular location is the membrane. The catalysed reaction is a 1,2-diacyl-sn-glycero-3-phospho-(1D-myo-inositol 4-phosphate) + ATP = a 1,2-diacyl-sn-glycero-3-phospho-(1D-myo-inositol-3,4-bisphosphate) + ADP + H(+). It catalyses the reaction a 1,2-diacyl-sn-glycero-3-phospho-(1D-myo-inositol) + ATP = a 1,2-diacyl-sn-glycero-3-phospho-(1D-myo-inositol-3-phosphate) + ADP + H(+). In terms of biological role, generates phosphatidylinositol 3-phosphate (PtdIns3P) and phosphatidylinositol 3,4-bisphosphate (PtdIns(3,4)P2) that act as second messengers. May play a role in SDF1A-stimulated chemotaxis. The polypeptide is Phosphatidylinositol 3-kinase C2 domain-containing subunit gamma (Pik3c2g) (Mus musculus (Mouse)).